A 144-amino-acid polypeptide reads, in one-letter code: D-aminoacyl-tRNA deacylase (144 aa).

The Gly-cisPro motif, important for rejection of L-amino acids motif lies at G136–P137.

This sequence belongs to the DTD family. Homodimer.

Its subcellular location is the cytoplasm. The enzyme catalyses glycyl-tRNA(Ala) + H2O = tRNA(Ala) + glycine + H(+). The catalysed reaction is a D-aminoacyl-tRNA + H2O = a tRNA + a D-alpha-amino acid + H(+). Its function is as follows. An aminoacyl-tRNA editing enzyme that deacylates mischarged D-aminoacyl-tRNAs. Also deacylates mischarged glycyl-tRNA(Ala), protecting cells against glycine mischarging by AlaRS. Acts via tRNA-based rather than protein-based catalysis; rejects L-amino acids rather than detecting D-amino acids in the active site. By recycling D-aminoacyl-tRNA to D-amino acids and free tRNA molecules, this enzyme counteracts the toxicity associated with the formation of D-aminoacyl-tRNA entities in vivo and helps enforce protein L-homochirality. This chain is D-aminoacyl-tRNA deacylase, found in Vibrio atlanticus (strain LGP32) (Vibrio splendidus (strain Mel32)).